The sequence spans 450 residues: Carbamoyl phosphate synthase arginine-specific small chain (450 aa).

The N-terminal 29 residues, 1–29 (MFAARLFKAMPARASAFPSVNASIQSRFM), are a transit peptide targeting the mitochondrion. The region spanning 220–407 (HVAVIDCGVK…LDSVRKYKAS (188 aa)) is the Glutamine amidotransferase type-1 domain. Catalysis depends on C296, which acts as the Nucleophile. Residues H380 and E382 contribute to the active site.

This sequence belongs to the CarA family. As to quaternary structure, heterodimer composed of 2 chains; the small (or glutamine) chain promotes the hydrolysis of glutamine to ammonia, which is used by the large (or ammonia) chain to synthesize carbamoyl phosphate.

It localises to the mitochondrion matrix. It carries out the reaction hydrogencarbonate + L-glutamine + 2 ATP + H2O = carbamoyl phosphate + L-glutamate + 2 ADP + phosphate + 2 H(+). The catalysed reaction is L-glutamine + H2O = L-glutamate + NH4(+). The protein operates within amino-acid biosynthesis; L-arginine biosynthesis; carbamoyl phosphate from bicarbonate: step 1/1. Its function is as follows. Small subunit of the arginine-specific carbamoyl phosphate synthase (CPSase). CPSase catalyzes the formation of carbamoyl phosphate from the ammonia moiety of glutamine, carbonate, and phosphate donated by ATP, the first step of the arginine biosynthetic pathway. The small subunit (glutamine amidotransferase) binds and cleaves glutamine to supply the large subunit with the substrate ammonia. This is Carbamoyl phosphate synthase arginine-specific small chain (cpa1) from Aspergillus oryzae (strain ATCC 42149 / RIB 40) (Yellow koji mold).